The chain runs to 456 residues: Histidine--tRNA ligase (456 aa).

Polar residues predominate over residues 1–11 (MTQNENPSAQS). A disordered region spans residues 1–22 (MTQNENPSAQSGAKPEDKARPA).

The protein belongs to the class-II aminoacyl-tRNA synthetase family. As to quaternary structure, homodimer.

The protein resides in the cytoplasm. It carries out the reaction tRNA(His) + L-histidine + ATP = L-histidyl-tRNA(His) + AMP + diphosphate + H(+). The polypeptide is Histidine--tRNA ligase (Cupriavidus pinatubonensis (strain JMP 134 / LMG 1197) (Cupriavidus necator (strain JMP 134))).